We begin with the raw amino-acid sequence, 132 residues long: Nucleoid-associated protein EspR (132 aa).

Residues I38–S50 constitute a DNA-binding region (H-T-H motif).

In terms of assembly, homodimer. Binds DNA as a dimer of dimers.

It localises to the cytoplasm. The protein resides in the nucleoid. Its function is as follows. Virulence regulator that has both architectural and regulatory roles. Impacts cell wall functions and pathogenesis through regulation of multiple genes. The protein is Nucleoid-associated protein EspR of Mycobacterium tuberculosis (strain CDC 1551 / Oshkosh).